The following is a 266-amino-acid chain: Translation initiation factor 2 subunit alpha (266 aa).

The 72-residue stretch at 12–83 (GDIVIGTVKD…RKGHIDLSLK (72 aa)) folds into the S1 motif domain.

This sequence belongs to the eIF-2-alpha family. Heterotrimer composed of an alpha, a beta and a gamma chain.

Its function is as follows. eIF-2 functions in the early steps of protein synthesis by forming a ternary complex with GTP and initiator tRNA. This Methanocaldococcus jannaschii (strain ATCC 43067 / DSM 2661 / JAL-1 / JCM 10045 / NBRC 100440) (Methanococcus jannaschii) protein is Translation initiation factor 2 subunit alpha (eif2a).